The primary structure comprises 812 residues: Valine--tRNA ligase (812 aa).

The short motif at 46 to 56 is the 'HIGH' region element; sequence PTVSGQLHIGH. The 'KMSKS' region signature appears at 536–540; it reads KMSKS. Lys539 lines the ATP pocket.

Belongs to the class-I aminoacyl-tRNA synthetase family. ValS type 2 subfamily. In terms of assembly, monomer.

It is found in the cytoplasm. The catalysed reaction is tRNA(Val) + L-valine + ATP = L-valyl-tRNA(Val) + AMP + diphosphate. Its function is as follows. Catalyzes the attachment of valine to tRNA(Val). As ValRS can inadvertently accommodate and process structurally similar amino acids such as threonine, to avoid such errors, it has a 'posttransfer' editing activity that hydrolyzes mischarged Thr-tRNA(Val) in a tRNA-dependent manner. In Rickettsia conorii (strain ATCC VR-613 / Malish 7), this protein is Valine--tRNA ligase.